A 430-amino-acid polypeptide reads, in one-letter code: RNA-binding protein 34 (430 aa).

Disordered stretches follow at residues 1-55 (MALE…GTGR), 72-123 (VPVP…ADRE), and 134-153 (EIHQKQGQKRKNSQPGVKVA). A phosphoserine mark is found at Ser-14, Ser-28, and Ser-99. The segment covering 23–34 (DGVRGSPPEDYR) has biased composition (basic and acidic residues). Over residues 113–123 (TNAEKKLADRE) the composition is skewed to basic and acidic residues. An N6-acetyllysine modification is found at Lys-151. 2 RRM domains span residues 185-280 (RTVF…LASE) and 287-364 (RSVF…RSVN). Lys-242 participates in a covalent cross-link: Glycyl lysine isopeptide (Lys-Gly) (interchain with G-Cter in SUMO2). Residue Ser-288 is modified to Phosphoserine. Disordered regions lie at residues 365-395 (KEKFKQQNSNPRLKNVSKPKQGLNFTSKTAE) and 411-430 (KTKKKGQKKSGRPKKQRKQK).

This sequence belongs to the RRM RBM34 family.

The protein localises to the nucleus. Its subcellular location is the nucleolus. This chain is RNA-binding protein 34 (RBM34), found in Homo sapiens (Human).